The chain runs to 383 residues: MRMMVAGGGTGGHVFPGIALAEEVVTRHPANDVVFVGTARGLEASVVPAAGFPIELIEVKGLKGKGIAGALLNLLLLPRAFLQSWRILKRWRPDVVVGVGGYASGPVVLTAWAMRIPTAVQEQNAIAGLTNRLLGRVVKAAFTAFPEAARHFAARKVYQLGNPIRRRLMENYMRPESAHGQPRLLVFGGSQGAHALNMRVIEALPHLADLRERIQITHQTGARDREYVEKGYRACGFTPDVREFIDDMSAAYAGCDLVVCRAGATTLAELTVCKKPSILVPFPAAADNHQVKNARSLVDAGAAVMIEERDLTGEVLAREIREILDAPERRERMARAAGRLGSPQAAKEIADVCMELVRRRWGSPFGQAREPGQKPARPPDLAS.

Residues Thr-10–Gly-12, Asn-124, Arg-165, Ser-190, Ile-245, and Gln-290 each bind UDP-N-acetyl-alpha-D-glucosamine. The disordered stretch occupies residues Pro-364–Ser-383.

This sequence belongs to the glycosyltransferase 28 family. MurG subfamily.

Its subcellular location is the cell inner membrane. The enzyme catalyses di-trans,octa-cis-undecaprenyl diphospho-N-acetyl-alpha-D-muramoyl-L-alanyl-D-glutamyl-meso-2,6-diaminopimeloyl-D-alanyl-D-alanine + UDP-N-acetyl-alpha-D-glucosamine = di-trans,octa-cis-undecaprenyl diphospho-[N-acetyl-alpha-D-glucosaminyl-(1-&gt;4)]-N-acetyl-alpha-D-muramoyl-L-alanyl-D-glutamyl-meso-2,6-diaminopimeloyl-D-alanyl-D-alanine + UDP + H(+). It participates in cell wall biogenesis; peptidoglycan biosynthesis. In terms of biological role, cell wall formation. Catalyzes the transfer of a GlcNAc subunit on undecaprenyl-pyrophosphoryl-MurNAc-pentapeptide (lipid intermediate I) to form undecaprenyl-pyrophosphoryl-MurNAc-(pentapeptide)GlcNAc (lipid intermediate II). In Anaeromyxobacter sp. (strain K), this protein is UDP-N-acetylglucosamine--N-acetylmuramyl-(pentapeptide) pyrophosphoryl-undecaprenol N-acetylglucosamine transferase.